The primary structure comprises 364 residues: UDP-N-acetylglucosamine--N-acetylmuramyl-(pentapeptide) pyrophosphoryl-undecaprenol N-acetylglucosamine transferase (364 aa).

UDP-N-acetyl-alpha-D-glucosamine is bound by residues 10-12 (TGG), Asn128, Arg170, Ser199, Ile250, and Gln295.

It belongs to the glycosyltransferase 28 family. MurG subfamily.

It is found in the cell inner membrane. It catalyses the reaction di-trans,octa-cis-undecaprenyl diphospho-N-acetyl-alpha-D-muramoyl-L-alanyl-D-glutamyl-meso-2,6-diaminopimeloyl-D-alanyl-D-alanine + UDP-N-acetyl-alpha-D-glucosamine = di-trans,octa-cis-undecaprenyl diphospho-[N-acetyl-alpha-D-glucosaminyl-(1-&gt;4)]-N-acetyl-alpha-D-muramoyl-L-alanyl-D-glutamyl-meso-2,6-diaminopimeloyl-D-alanyl-D-alanine + UDP + H(+). It participates in cell wall biogenesis; peptidoglycan biosynthesis. Cell wall formation. Catalyzes the transfer of a GlcNAc subunit on undecaprenyl-pyrophosphoryl-MurNAc-pentapeptide (lipid intermediate I) to form undecaprenyl-pyrophosphoryl-MurNAc-(pentapeptide)GlcNAc (lipid intermediate II). The polypeptide is UDP-N-acetylglucosamine--N-acetylmuramyl-(pentapeptide) pyrophosphoryl-undecaprenol N-acetylglucosamine transferase (Chlorobaculum tepidum (strain ATCC 49652 / DSM 12025 / NBRC 103806 / TLS) (Chlorobium tepidum)).